Here is a 215-residue protein sequence, read N- to C-terminus: 3-demethoxyubiquinol 3-hydroxylase (215 aa).

The Fe cation site is built by Glu64, Glu94, His97, Glu146, Glu178, and His181.

The protein belongs to the COQ7 family. Fe cation serves as cofactor.

The protein localises to the cell membrane. It carries out the reaction a 5-methoxy-2-methyl-3-(all-trans-polyprenyl)benzene-1,4-diol + AH2 + O2 = a 3-demethylubiquinol + A + H2O. Its pathway is cofactor biosynthesis; ubiquinone biosynthesis. In terms of biological role, catalyzes the hydroxylation of 2-nonaprenyl-3-methyl-6-methoxy-1,4-benzoquinol during ubiquinone biosynthesis. The polypeptide is 3-demethoxyubiquinol 3-hydroxylase (Coxiella burnetii (strain RSA 331 / Henzerling II)).